We begin with the raw amino-acid sequence, 307 residues long: Dioxygenase swnH1 (307 aa).

Fe cation-binding residues include His149, Asp151, and His227.

The protein belongs to the PhyH family. In terms of assembly, homodimer. Requires Fe cation as cofactor.

Its pathway is mycotoxin biosynthesis. Dioxygenase; part of the gene cluster that mediates the biosynthesis of swainsonine (SW), a cytotoxic fungal alkaloid and a potential cancer therapy drug. Swainsonine production occurs via a multibranched pathway and is dispensable for fungal colonization of plants and infection of insect hosts. The first step of swainsonine biosynthesis is the production of the precursor pipecolic acid (PA) via conversion of L-lysine (Lys) to 1-piperideine-6-carboxylate (P6C) by the aminotransferase swnA, the latter being further reduced to PA by the reductase swnR. The PKS-NRPS hybrid synthetase swnK uptakes and condensates PA and malonyl-CoA with and without skipping of the ketoreductase (KR) domain in order to produce 3 intermediates, 1-oxoindolizidine, (1S)-1-hydroxyindolizin, and (1R)-1-hydroxyindolizine; with the transisomer (1S)-1-hydroxyindolizin being predominant. The terminal thioester reductase (TE) domain of swnK is involved in reduction of the thioester bond to release the intermediate aldehydes. The oxidoreductase swnN could contribute to the reduction of 1-oxoindolizidine to (1S)-1-hydroxyindolizin and (1R)-1-hydroxyindolizine, contributing to the major route of SW production. The dioxygenase swnH2 would be responsible for the oxidization of (1R)-1-hydroxyindolizine into (1R,2S)-1,2-dihydroxyindolizine and of (1S)-1-hydroxyindolizin to yield both (1R,2S)-1,2-dihydroxyindolizine and (1S,2S)-1,2-dihydroxyindolizine. The dioxygenase swnH1 then performs the conversion of the 1,2-dihydroxyindolizine epimers to SW. In Arthroderma benhamiae (strain ATCC MYA-4681 / CBS 112371) (Trichophyton mentagrophytes), this protein is Dioxygenase swnH1.